Consider the following 119-residue polypeptide: Large ribosomal subunit protein bL20 (119 aa).

This sequence belongs to the bacterial ribosomal protein bL20 family.

In terms of biological role, binds directly to 23S ribosomal RNA and is necessary for the in vitro assembly process of the 50S ribosomal subunit. It is not involved in the protein synthesizing functions of that subunit. This is Large ribosomal subunit protein bL20 from Clostridium botulinum (strain Alaska E43 / Type E3).